The primary structure comprises 142 residues: Large ribosomal subunit protein uL13 (142 aa).

Belongs to the universal ribosomal protein uL13 family. As to quaternary structure, part of the 50S ribosomal subunit.

Functionally, this protein is one of the early assembly proteins of the 50S ribosomal subunit, although it is not seen to bind rRNA by itself. It is important during the early stages of 50S assembly. This is Large ribosomal subunit protein uL13 from Caldicellulosiruptor saccharolyticus (strain ATCC 43494 / DSM 8903 / Tp8T 6331).